Here is an 831-residue protein sequence, read N- to C-terminus: uncharacterized protein (831 aa).

The region spanning 1–146 is the CID domain; it reads MDIFDSTITS…RAFSILSGVA (146 aa). Disordered regions lie at residues 205 to 233, 265 to 354, 434 to 480, and 572 to 831; these read SSSS…SSIS, KEHF…NYNN, IGNS…NEDS, and CGAD…SNRH. Low complexity-rich tracts occupy residues 272 to 354 and 434 to 477; these read NDTS…NYNN and IGNS…NNNN. Composition is skewed to basic and acidic residues over residues 592-601 and 611-813; these read NENKQNDSHR and SRGE…RSKE. The span at 817 to 831 shows a compositional bias: low complexity; it reads NNDNRSSSNRSSNRH.

This is an uncharacterized protein from Dictyostelium discoideum (Social amoeba).